The chain runs to 130 residues: MVYKVVVSDEDVTYQLELEDKDAKTVNGLKIGEEFNGGVLGLKGYKLRITGGSDKNGFPMKEDVDGTRRFKSLVNGGTGFKPTKKGLRRRKTVRGNTIADDISQINVKVSERGEQTLAEIFAEPEEEQEE.

This sequence belongs to the eukaryotic ribosomal protein eS6 family.

In Methanosphaera stadtmanae (strain ATCC 43021 / DSM 3091 / JCM 11832 / MCB-3), this protein is Small ribosomal subunit protein eS6.